A 323-amino-acid chain; its full sequence is Beta-ketoacyl-[acyl-carrier-protein] synthase III (323 aa).

Catalysis depends on residues cysteine 114 and histidine 250. The ACP-binding stretch occupies residues glutamine 251–arginine 255. The active site involves asparagine 280.

It belongs to the thiolase-like superfamily. FabH family. Homodimer.

Its subcellular location is the cytoplasm. It catalyses the reaction malonyl-[ACP] + acetyl-CoA + H(+) = 3-oxobutanoyl-[ACP] + CO2 + CoA. It functions in the pathway lipid metabolism; fatty acid biosynthesis. Catalyzes the condensation reaction of fatty acid synthesis by the addition to an acyl acceptor of two carbons from malonyl-ACP. Catalyzes the first condensation reaction which initiates fatty acid synthesis and may therefore play a role in governing the total rate of fatty acid production. Possesses both acetoacetyl-ACP synthase and acetyl transacylase activities. Its substrate specificity determines the biosynthesis of branched-chain and/or straight-chain of fatty acids. The protein is Beta-ketoacyl-[acyl-carrier-protein] synthase III of Cereibacter sphaeroides (strain ATCC 17029 / ATH 2.4.9) (Rhodobacter sphaeroides).